Here is a 91-residue protein sequence, read N- to C-terminus: Small ribosomal subunit protein uS19 (91 aa).

Belongs to the universal ribosomal protein uS19 family.

Its function is as follows. Protein S19 forms a complex with S13 that binds strongly to the 16S ribosomal RNA. The polypeptide is Small ribosomal subunit protein uS19 (Aromatoleum aromaticum (strain DSM 19018 / LMG 30748 / EbN1) (Azoarcus sp. (strain EbN1))).